Here is a 495-residue protein sequence, read N- to C-terminus: UDP-N-acetylmuramoyl-L-alanyl-D-glutamate--2,6-diaminopimelate ligase (495 aa).

UDP-N-acetyl-alpha-D-muramoyl-L-alanyl-D-glutamate is bound by residues L27, S29, and 44-46 (HQA). 116-122 (GTNGKTT) contributes to the ATP binding site. UDP-N-acetyl-alpha-D-muramoyl-L-alanyl-D-glutamate is bound by residues N157, 158-159 (TT), S185, Q191, and R193. An N6-carboxylysine modification is found at K225. Meso-2,6-diaminopimelate-binding positions include R390, 414–417 (DNPR), G465, and E469. Residues 414–417 (DNPR) carry the Meso-diaminopimelate recognition motif motif.

Belongs to the MurCDEF family. MurE subfamily. Requires Mg(2+) as cofactor. In terms of processing, carboxylation is probably crucial for Mg(2+) binding and, consequently, for the gamma-phosphate positioning of ATP.

Its subcellular location is the cytoplasm. The catalysed reaction is UDP-N-acetyl-alpha-D-muramoyl-L-alanyl-D-glutamate + meso-2,6-diaminopimelate + ATP = UDP-N-acetyl-alpha-D-muramoyl-L-alanyl-gamma-D-glutamyl-meso-2,6-diaminopimelate + ADP + phosphate + H(+). Its pathway is cell wall biogenesis; peptidoglycan biosynthesis. Its function is as follows. Catalyzes the addition of meso-diaminopimelic acid to the nucleotide precursor UDP-N-acetylmuramoyl-L-alanyl-D-glutamate (UMAG) in the biosynthesis of bacterial cell-wall peptidoglycan. The sequence is that of UDP-N-acetylmuramoyl-L-alanyl-D-glutamate--2,6-diaminopimelate ligase from Salmonella typhimurium (strain LT2 / SGSC1412 / ATCC 700720).